Reading from the N-terminus, the 1119-residue chain is MAPKSSQSSQGLSQRSKQQTISSFFTPKPSQTPKAPPKPAALAVPNGADQDDDDDEDEDIAPPRQLTPARKRSIDEQHEDEEAGRSSPPKRVRVANDEPRPSLGNASATTLNAAKPPKITERTSKFLFSSSPVVRDETDAKDDAAATQKLREKLHEKFVKKLGRPDSFAELRRRNKVISEDNGNGEEGEGEEDEEEEEPAPKPTKGRKGAATKKTSKLTPMELQYLDIKRKHMDTVIVMEVGYKFKFFGEDARTASKELGIVCIPGKFRYDEHPSEAHYDRFASASFPVHRLQVHVKRLVKANHKVGVVRQLETAALKAAGNNRNTPFVRKLTNLYTKGTYVDDIEGLETPTAGAQATGYLLCVTETNAKGWGTDEKVQVGLVAVQPATGDIIYDDFEDGFMRSEIETRLLHIAPAEFLIVGDLSKATDKLIHHLSASKTNVFGDRSRVERVEKPKTMAAQAYSHISNFYADKMKSSQEGGSEQGAILDKVHQLSEHVTICLSAMITYLSDYALEHVFDLTKYFQPFSARSYMLLNGNTLSSLEIYQNQTDYTSKGSLFWTMDRTKTRFGQRLLRKWVGRPLIDKERLEERIAAVEELKEGEHTIAVDKVKFLLGKIKTDLEKVLIRIYYKKCSRPELLAALQILQDIASQYLSAKTPEQSGFSSILLSEAVSNVPKIYEDVNSFLEKINAKAAKDDDKYGFFREEFEAEDINDLKLSIASVEDDLNTHRKDAAAKLGKTKVDYVTVAGIEYLIEVKRKSVEEKKVPASWQQISATKTTLRFHTPEVKRMLQERDQYKESLAAACDTAFKRLLDDIAAKYQSLRDCVSSLATLDALLSLATLANQPGYVKPTFVETTELDIVGGRHPMVEQLLLDAYVPNDVHLSGDATRALLVTGPNMGGKSSYVRSAALIAIMGQIGSYVPAESAKLGMLDAVFTRMGALDNMLKGESTFMVELNETADILRSATSRSLIILDELGRGTSTFDGVAIAEAVLDYVIRDVGALTLFITHYQHLARLQDRFNGELKNVHMSFEERDGGKEVVFLYEVAEGTSHRSYGLNVARLAKVPEKVIETAEVKSSELEESMGISRVANMARMVKGLLEDGGEEGLERLIEGIEQL.

Low complexity predominate over residues 1-19; sequence MAPKSSQSSQGLSQRSKQQ. Disordered regions lie at residues 1-148 and 173-215; these read MAPK…AATQ and RRNK…TKKT. Positions 49–60 are enriched in acidic residues; that stretch reads DQDDDDDEDEDI. Positions 134–148 are enriched in basic and acidic residues; the sequence is VRDETDAKDDAAATQ. The span at 183–198 shows a compositional bias: acidic residues; it reads GNGEEGEGEEDEEEEE. Positions 204 to 215 are enriched in basic residues; it reads TKGRKGAATKKT. Residues 212–339 form a mispair-binding domain region; sequence TKKTSKLTPM…RKLTNLYTKG (128 aa). Position 896 to 903 (896 to 903) interacts with ATP; the sequence is GPNMGGKS.

It belongs to the DNA mismatch repair MutS family. MSH3 subfamily. Heterodimer consisting of MSH2-MSH3 (MutS beta). Forms a ternary complex with MutL alpha (MLH1-PMS1).

The protein resides in the nucleus. Functionally, component of the post-replicative DNA mismatch repair system (MMR). Heterodimerizes with MSH2 to form MutS beta, which binds to DNA mismatches thereby initiating DNA repair. MSH3 provides substrate-binding and substrate specificity to the complex. When bound, the MutS beta heterodimer bends the DNA helix and shields approximately 20 base pairs. Acts mainly to repair insertion-deletion loops (IDLs) from 2 to 13 nucleotides in size, but can also repair base-base and single insertion-deletion mismatches that occur during replication. After mismatch binding, forms a ternary complex with the MutL alpha heterodimer, which is thought to be responsible for directing the downstream MMR events, including strand discrimination, excision, and resynthesis. ATP binding and hydrolysis play a pivotal role in mismatch repair functions. The protein is DNA mismatch repair protein MSH3 (MSH3) of Phaeosphaeria nodorum (strain SN15 / ATCC MYA-4574 / FGSC 10173) (Glume blotch fungus).